Here is a 513-residue protein sequence, read N- to C-terminus: Na(+)/H(+) antiporter NhaB (513 aa).

The next 12 helical transmembrane spans lie at 21–41, 64–84, 88–108, 119–139, 143–163, 202–222, 243–263, 299–318, 322–344, 350–370, 389–409, and 477–497; these read ICII…SPFV, QPGG…AHHV, IMAN…IYFM, LLIV…SATF, FLDA…FYGV, LLMH…VGEP, LPVS…LEHF, MGIQ…LHLA, IIGL…HAIG, PMPF…IVDL, LALF…VFVG, and MALP…EFLL.

It belongs to the NhaB Na(+)/H(+) (TC 2.A.34) antiporter family.

It is found in the cell inner membrane. It catalyses the reaction 2 Na(+)(in) + 3 H(+)(out) = 2 Na(+)(out) + 3 H(+)(in). Its function is as follows. Na(+)/H(+) antiporter that extrudes sodium in exchange for external protons. This is Na(+)/H(+) antiporter NhaB from Actinobacillus pleuropneumoniae serotype 3 (strain JL03).